A 402-amino-acid polypeptide reads, in one-letter code: N-acetyltransferase Eis (402 aa).

The 152-residue stretch at 3–154 (VTLCSPTEDD…RFARFHADAP (152 aa)) folds into the N-acetyltransferase domain. Residues 85–87 (VAV), 93–98 (RRGLLR), and 121–122 (SE) each bind acetyl-CoA. Tyrosine 126 serves as the catalytic Proton donor. Phenylalanine 402 acts as the Proton acceptor; via carboxylate in catalysis.

This sequence belongs to the acetyltransferase Eis family. In terms of assembly, homohexamer; trimer of dimers.

The protein localises to the secreted. It localises to the host cytoplasmic vesicle. The protein resides in the host phagosome. Its subcellular location is the extracellular vesicle. It is found in the bacterial extracellular vesicle. The protein localises to the host extracellular space. The catalysed reaction is L-lysyl-[protein] + acetyl-CoA = N(6)-acetyl-L-lysyl-[protein] + CoA + H(+). Effector that is released into the host cell and affects host immune responses. Acts as an acetyltransferase that acetylates lysine residues of host proteins. The protein is N-acetyltransferase Eis of Mycobacterium bovis (strain ATCC BAA-935 / AF2122/97).